The following is a 130-amino-acid chain: MARKRGGSSKKQKKVSFDYGVVHIKSTFNNTIITLTDKDGNTLTWASGGTVGFEGTRKGTPYAAQLAADKVAREALRMGIKKVDVLVKGPGPGREPAIRTLQGAGLEINQIKDVTPIPFNGCRPKKRRRV.

This sequence belongs to the universal ribosomal protein uS11 family. As to quaternary structure, part of the 30S ribosomal subunit. Interacts with proteins S7 and S18. Binds to IF-3.

Located on the platform of the 30S subunit, it bridges several disparate RNA helices of the 16S rRNA. Forms part of the Shine-Dalgarno cleft in the 70S ribosome. The polypeptide is Small ribosomal subunit protein uS11 (Thermotoga maritima (strain ATCC 43589 / DSM 3109 / JCM 10099 / NBRC 100826 / MSB8)).